Consider the following 1521-residue polypeptide: Protein dispatched homolog 1 (1521 aa).

Over residues methionine 1 to valine 10 the composition is skewed to polar residues. Residues methionine 1 to leucine 55 form a disordered region. Low complexity predominate over residues leucine 11–proline 35. 2 N-linked (GlcNAc...) asparagine glycosylation sites follow: asparagine 14 and asparagine 58. The chain crosses the membrane as a helical span at residues valine 189–valine 209. Residue asparagine 390 is glycosylated (N-linked (GlcNAc...) asparagine). The region spanning glycine 485–leucine 657 is the SSD domain. Helical transmembrane passes span leucine 499 to valine 519, methionine 524 to leucine 544, and valine 548 to isoleucine 568. An N-linked (GlcNAc...) asparagine glycan is attached at asparagine 581. Helical transmembrane passes span alanine 603–valine 623, glycine 637–leucine 657, tyrosine 717–asparagine 737, methionine 986–isoleucine 1006, leucine 1008–leucine 1028, valine 1038–tyrosine 1058, isoleucine 1081–leucine 1101, and phenylalanine 1109–cysteine 1129. Polar residues-rich tracts occupy residues glutamine 1355–histidine 1364 and threonine 1418–glutamine 1428. A disordered region spans residues glutamine 1355 to leucine 1440. N-linked (GlcNAc...) asparagine glycosylation occurs at asparagine 1455.

It belongs to the dispatched family. Interacts with SHH; via the cholesterol anchor of the dually lipid-modified SHH (ShhNp).

The protein resides in the membrane. Its function is as follows. Functions in hedgehog (Hh) signaling. Regulates the release and extracellular accumulation of cholesterol-modified hedgehog proteins and is hence required for effective production of the Hh signal. Synergizes with SCUBE2 to cause an increase in SHH secretion. The protein is Protein dispatched homolog 1 (Disp1) of Mus musculus (Mouse).